Here is a 378-residue protein sequence, read N- to C-terminus: 5-amino-6-(D-ribitylamino)uracil--L-tyrosine 4-hydroxyphenyl transferase (378 aa).

Residues 59–306 (VTYVINRNIN…TAVARIYLGN (248 aa)) enclose the Radical SAM core domain. The [4Fe-4S] cluster site is built by Cys73, Cys77, and Cys80.

It belongs to the radical SAM superfamily. CofH family. As to quaternary structure, consists of two subunits, CofG and CofH. [4Fe-4S] cluster is required as a cofactor.

It carries out the reaction 5-amino-6-(D-ribitylamino)uracil + L-tyrosine + S-adenosyl-L-methionine = 5-amino-5-(4-hydroxybenzyl)-6-(D-ribitylimino)-5,6-dihydrouracil + 2-iminoacetate + 5'-deoxyadenosine + L-methionine + H(+). Its pathway is cofactor biosynthesis; coenzyme F0 biosynthesis. Catalyzes the radical-mediated synthesis of 5-amino-5-(4-hydroxybenzyl)-6-(D-ribitylimino)-5,6-dihydrouracil from 5-amino-6-(D-ribitylamino)uracil and L-tyrosine. In Microcystis aeruginosa (strain NIES-843 / IAM M-2473), this protein is 5-amino-6-(D-ribitylamino)uracil--L-tyrosine 4-hydroxyphenyl transferase.